We begin with the raw amino-acid sequence, 466 residues long: MRVFNTLTRQKEEFIPIITGEVKMYVCGPTVYNFFHIGNGRTFIVFDTIRRYLEYRGYKVRFVQNFTDIDDKMINKANDEGITVKELGDKYIKEYYQDADSLKIERATVNPRATEYIHDIIKFVEELIEAGFAYEVDGDVYYSTKKFDNYGRLVGQNLDDLQVGARISVDERKKDPMDFAVWKAQKPGEPAWESPWGPGRPGWHIECSCMAKKLLGDTIDIHAGGMDLRFPHHENEIAQSEALTGKTFANYWLHAAFVNVDNKKMSKSLNNFFTAREVLEEYSSDAIRFLMLSGHYRIQINFTKELLDSAKSSIERLYNCINNLENLKDEVTKKLMDEAEEKYLKSLDKYREKFIEKMDDDFNTADAISVLFDLTKDINNNVNINSSSELCEKAESMVRELGNPLGILQDRIEKDLETEIQELIEKRQQARKNKDFALADKIRDDLKSRNIILEDTPQGVRWKKID.

Residue C27 participates in Zn(2+) binding. The 'HIGH' region signature appears at 29 to 39 (PTVYNFFHIGN). Residues C207, H232, and E236 each coordinate Zn(2+). Residues 264 to 268 (KMSKS) carry the 'KMSKS' region motif. K267 contributes to the ATP binding site.

Belongs to the class-I aminoacyl-tRNA synthetase family. As to quaternary structure, monomer. The cofactor is Zn(2+).

Its subcellular location is the cytoplasm. The enzyme catalyses tRNA(Cys) + L-cysteine + ATP = L-cysteinyl-tRNA(Cys) + AMP + diphosphate. The polypeptide is Cysteine--tRNA ligase (Clostridium beijerinckii (strain ATCC 51743 / NCIMB 8052) (Clostridium acetobutylicum)).